Reading from the N-terminus, the 525-residue chain is Alcohol O-acetyltransferase 1 (525 aa).

The membrane association stretch occupies residues 24–41 (GHARRMGSVEDLYVALNR). Active-site charge relay system residues include histidine 191 and aspartate 195. The segment at 508–525 (QESLEELCSIYKALLLGP) is membrane association.

Belongs to the ATF1 alcohol acetyltransferase family.

Its subcellular location is the lipid droplet. It localises to the endoplasmic reticulum membrane. It carries out the reaction an aliphatic alcohol + acetyl-CoA = an acetyl ester + CoA. The catalysed reaction is a fatty acyl-CoA + H2O = a fatty acid + CoA + H(+). The enzyme catalyses 3-methylbutanol + acetyl-CoA = 3-methylbutyl acetate + CoA. Found to be inhibited by cadmium, copper, zinc and mercurium divalent cations and sulfhydryl reagents. Inhibited by the addition of unsaturated fatty acids to the culture. Its function is as follows. Major alcohol O-acetyltransferase that uses acetyl-CoA to synthesize acetate esters from various alcohols, producing ethyl acetate, isoamyl acetate, isobutyl acetate, butyl acetate, hexyl acetate, heptyl acetate and octyl acetate. The alcohol acyltransferase activity is promiscuous with regard to alcohol but relatively specific for acetyl-CoA since ATF1 does not use any other acyl-CoAs (C3, C4, C5, C6, C8, C10, C12). Acts also as an efficient thioesterase in vitro with specificity towards medium-chain-length acyl-CoAs. In natural environments, the production of aromatic volatile metabolites promotes dispersal through insect vectors. In Saccharomyces cerevisiae (strain ATCC 204508 / S288c) (Baker's yeast), this protein is Alcohol O-acetyltransferase 1.